A 462-amino-acid chain; its full sequence is UPF0236 protein TTE2489 (462 aa).

It belongs to the UPF0236 family.

This is UPF0236 protein TTE2489 from Caldanaerobacter subterraneus subsp. tengcongensis (strain DSM 15242 / JCM 11007 / NBRC 100824 / MB4) (Thermoanaerobacter tengcongensis).